A 936-amino-acid chain; its full sequence is ABC transporter A family member 5 (936 aa).

7 helical membrane-spanning segments follow: residues 34–54 (LIVIPFYLCVLLVGIQVLFDT), 340–360 (ASLIGPIFFTWVILLLFPVML), 393–413 (FLAISIVYIICLMIFGSAIGL), 422–442 (SIQFIFYFLCINLQISIAFLV), 454–474 (VAAYLYVFGSGLLGAFLFQFL), 484–501 (WIYIMELYPGFSLYRGLY), and 527–547 (AMEEIFYIIIVEWFVALIAAY). An ABC transporter domain is found at 614-851 (IVCDNLKKVY…YGGSYVLTMT (238 aa)). 652 to 659 (GPNGAGKT) is an ATP binding site.

This sequence belongs to the ABC transporter superfamily. ABCA family. CPR flippase (TC 3.A.1.211) subfamily.

It is found in the membrane. The protein is ABC transporter A family member 5 (ABCA5) of Arabidopsis thaliana (Mouse-ear cress).